Consider the following 23-residue polypeptide: SVKSEVDNFDKHLKAESAPFNNE.

Residues 1-15 (SVKSEVDNFDKHLKA) are compositionally biased toward basic and acidic residues. Residues 1 to 23 (SVKSEVDNFDKHLKAESAPFNNE) form a disordered region.

Expressed in hemolymph.

It localises to the secreted. In terms of biological role, constitutes the major component of lipophorin, which mediates transport for various types of lipids in hemolymph. Acts by forming lipoprotein particles that bind lipoproteins and lipids. This Galleria mellonella (Greater wax moth) protein is Apolipophorin-1.